The following is a 206-amino-acid chain: Ribosomal RNA small subunit methyltransferase G (206 aa).

S-adenosyl-L-methionine is bound by residues G74, L79, 125-126 (VE), and R140.

This sequence belongs to the methyltransferase superfamily. RNA methyltransferase RsmG family.

It localises to the cytoplasm. The catalysed reaction is guanosine(527) in 16S rRNA + S-adenosyl-L-methionine = N(7)-methylguanosine(527) in 16S rRNA + S-adenosyl-L-homocysteine. In terms of biological role, specifically methylates the N7 position of guanine in position 527 of 16S rRNA. The polypeptide is Ribosomal RNA small subunit methyltransferase G (Shewanella oneidensis (strain ATCC 700550 / JCM 31522 / CIP 106686 / LMG 19005 / NCIMB 14063 / MR-1)).